A 61-amino-acid polypeptide reads, in one-letter code: ATP synthase F(0) complex subunit 8 (61 aa).

The helical transmembrane segment at 10–32 (FMILSSTWLIYTIILQPKILSHL) threads the bilayer.

Belongs to the ATPase protein 8 family. Component of the ATP synthase complex composed at least of ATP5F1A/subunit alpha, ATP5F1B/subunit beta, ATP5MC1/subunit c (homooctomer), MT-ATP6/subunit a, MT-ATP8/subunit 8, ATP5ME/subunit e, ATP5MF/subunit f, ATP5MG/subunit g, ATP5MK/subunit k, ATP5MJ/subunit j, ATP5F1C/subunit gamma, ATP5F1D/subunit delta, ATP5F1E/subunit epsilon, ATP5PF/subunit F6, ATP5PB/subunit b, ATP5PD/subunit d, ATP5PO/subunit OSCP. ATP synthase complex consists of a soluble F(1) head domain (subunits alpha(3) and beta(3)) - the catalytic core - and a membrane F(0) domain - the membrane proton channel (subunits c, a, 8, e, f, g, k and j). These two domains are linked by a central stalk (subunits gamma, delta, and epsilon) rotating inside the F1 region and a stationary peripheral stalk (subunits F6, b, d, and OSCP).

The protein resides in the mitochondrion membrane. In terms of biological role, subunit 8, of the mitochondrial membrane ATP synthase complex (F(1)F(0) ATP synthase or Complex V) that produces ATP from ADP in the presence of a proton gradient across the membrane which is generated by electron transport complexes of the respiratory chain. ATP synthase complex consist of a soluble F(1) head domain - the catalytic core - and a membrane F(1) domain - the membrane proton channel. These two domains are linked by a central stalk rotating inside the F(1) region and a stationary peripheral stalk. During catalysis, ATP synthesis in the catalytic domain of F(1) is coupled via a rotary mechanism of the central stalk subunits to proton translocation. In vivo, can only synthesize ATP although its ATP hydrolase activity can be activated artificially in vitro. Part of the complex F(0) domain. The protein is ATP synthase F(0) complex subunit 8 of Chelonia mydas (Green sea-turtle).